We begin with the raw amino-acid sequence, 520 residues long: Anthranilate synthase component 1 (520 aa).

L-tryptophan-binding positions include Ser-40 and 291 to 293; that span reads PYM. 328–329 is a chorismate binding site; sequence GT. Mg(2+) is bound at residue Glu-361. Residues Tyr-449, Arg-469, 483–485, and Gly-485 contribute to the chorismate site; that span reads GAG. Glu-498 lines the Mg(2+) pocket.

It belongs to the anthranilate synthase component I family. As to quaternary structure, heterotetramer consisting of two non-identical subunits: a beta subunit (TrpG) and a large lpha subunit (TrpE). Requires Mg(2+) as cofactor.

It carries out the reaction chorismate + L-glutamine = anthranilate + pyruvate + L-glutamate + H(+). The protein operates within amino-acid biosynthesis; L-tryptophan biosynthesis; L-tryptophan from chorismate: step 1/5. Cooperatively feedback inhibited by tryptophan. Functionally, part of a heterotetrameric complex that catalyzes the two-step biosynthesis of anthranilate, an intermediate in the biosynthesis of L-tryptophan. In the first step, the glutamine-binding beta subunit (TrpG) of anthranilate synthase (AS) provides the glutamine amidotransferase activity which generates ammonia as a substrate that, along with chorismate, is used in the second step, catalyzed by the large alpha subunit of AS (TrpE) to produce anthranilate. In the absence of TrpG, TrpE can synthesize anthranilate directly from chorismate and high concentrations of ammonia. This is Anthranilate synthase component 1 (trpE) from Escherichia coli (strain K12).